The following is a 298-amino-acid chain: ATP synthase gamma chain (298 aa).

Belongs to the ATPase gamma chain family. In terms of assembly, F-type ATPases have 2 components, CF(1) - the catalytic core - and CF(0) - the membrane proton channel. CF(1) has five subunits: alpha(3), beta(3), gamma(1), delta(1), epsilon(1). CF(0) has three main subunits: a, b and c.

It localises to the cell membrane. In terms of biological role, produces ATP from ADP in the presence of a proton gradient across the membrane. The gamma chain is believed to be important in regulating ATPase activity and the flow of protons through the CF(0) complex. The chain is ATP synthase gamma chain from Frankia casuarinae (strain DSM 45818 / CECT 9043 / HFP020203 / CcI3).